Reading from the N-terminus, the 439-residue chain is MMPLVAIVGRPNVGKSTLFNRLVGRRKAIVDDMPGVTRDRNYETVTRFEAPFILIDTGGFEPVSEDRLLQQMREQSQLAMEEADVIIFLMDGRAGLTPSDVEVVEMLRRVKKPVFFVVNKVDGEKIENEAADFYTLGIGTLHTISAEHNRGVNDLMEEVVAALPKSSTRLDDEDITRIAVVGRPNVGKSSLVNRLLGFERVVANPTPGTTRDSVDTLFACNKKRYLLIDTAGIRRKGKTTQKLEKYSVVDSLRSIERADVVLIIINAEEGVTEQDERIAGYAFEAGKACIFVVNKWDTLAKDNSTLGKFVDQIKTEFKYLSFAPIVFVSAKSGQRINRVMEEVERVMAQYSKRVSTSDLNRVFSEAVEKHHAPLSHGRRVKFYFATQVGTKPPTFVLFTNQPEGVHFSYERYLMNKFREAFDFTGSPLKIIFRGRDRRE.

2 EngA-type G domains span residues 3 to 167 and 176 to 351; these read PLVA…PKSS and TRIA…AQYS. GTP contacts are provided by residues 9–16, 56–60, 119–122, 182–189, 229–233, and 294–297; these read GRPNVGKS, DTGGF, NKVD, DTAGI, and NKWD. Residues 352–436 form the KH-like domain; that stretch reads KRVSTSDLNR…PLKIIFRGRD (85 aa).

It belongs to the TRAFAC class TrmE-Era-EngA-EngB-Septin-like GTPase superfamily. EngA (Der) GTPase family. As to quaternary structure, associates with the 50S ribosomal subunit.

GTPase that plays an essential role in the late steps of ribosome biogenesis. This is GTPase Der from Geobacter metallireducens (strain ATCC 53774 / DSM 7210 / GS-15).